The following is a 463-amino-acid chain: Siroheme synthase (463 aa).

The precorrin-2 dehydrogenase /sirohydrochlorin ferrochelatase stretch occupies residues 1–203 (MDYLPLFHKL…GQGAEAERLL (203 aa)). Residues 22-23 (EI) and 43-44 (PD) each bind NAD(+). Position 128 is a phosphoserine (S128). The interval 216-463 (GEVYLVGAGP…LAWFEGSQNS (248 aa)) is uroporphyrinogen-III C-methyltransferase. Residue P225 participates in S-adenosyl-L-methionine binding. Residue D248 is the Proton acceptor of the active site. K270 acts as the Proton donor in catalysis. S-adenosyl-L-methionine contacts are provided by residues 301-303 (GGD), I306, 331-332 (TA), M383, and G412.

The protein in the N-terminal section; belongs to the precorrin-2 dehydrogenase / sirohydrochlorin ferrochelatase family. It in the C-terminal section; belongs to the precorrin methyltransferase family.

The catalysed reaction is uroporphyrinogen III + 2 S-adenosyl-L-methionine = precorrin-2 + 2 S-adenosyl-L-homocysteine + H(+). It carries out the reaction precorrin-2 + NAD(+) = sirohydrochlorin + NADH + 2 H(+). It catalyses the reaction siroheme + 2 H(+) = sirohydrochlorin + Fe(2+). It functions in the pathway cofactor biosynthesis; adenosylcobalamin biosynthesis; precorrin-2 from uroporphyrinogen III: step 1/1. It participates in cofactor biosynthesis; adenosylcobalamin biosynthesis; sirohydrochlorin from precorrin-2: step 1/1. Its pathway is porphyrin-containing compound metabolism; siroheme biosynthesis; precorrin-2 from uroporphyrinogen III: step 1/1. The protein operates within porphyrin-containing compound metabolism; siroheme biosynthesis; siroheme from sirohydrochlorin: step 1/1. It functions in the pathway porphyrin-containing compound metabolism; siroheme biosynthesis; sirohydrochlorin from precorrin-2: step 1/1. Functionally, multifunctional enzyme that catalyzes the SAM-dependent methylations of uroporphyrinogen III at position C-2 and C-7 to form precorrin-2 via precorrin-1. Then it catalyzes the NAD-dependent ring dehydrogenation of precorrin-2 to yield sirohydrochlorin. Finally, it catalyzes the ferrochelation of sirohydrochlorin to yield siroheme. In Pseudomonas putida (strain ATCC 700007 / DSM 6899 / JCM 31910 / BCRC 17059 / LMG 24140 / F1), this protein is Siroheme synthase.